Reading from the N-terminus, the 258-residue chain is Peptidase inhibitor 15 (258 aa).

Residues Met-1 to Thr-21 form the signal peptide. Residues Val-22 to Arg-60 constitute a propeptide that is removed on maturation. Asn-36 and Asn-124 each carry an N-linked (GlcNAc...) asparagine glycan. The 141-residue stretch at Leu-71 to Tyr-211 folds into the SCP domain.

It belongs to the CRISP family. In terms of processing, N-glycosylated. As to expression, weakly expressed. Expressed at low level in prostate, mammary gland, salivary gland and thyroid gland.

The protein localises to the secreted. Its function is as follows. Serine protease inhibitor which displays weak inhibitory activity against trypsin. May play a role in facial patterning during embryonic development. In Mus musculus (Mouse), this protein is Peptidase inhibitor 15 (Pi15).